A 659-amino-acid chain; its full sequence is Cysteine-rich receptor-like protein kinase 7 (659 aa).

The first 23 residues, 1–23 (MSSLFPFIFLFLFSFLTSFRASA), serve as a signal peptide directing secretion. Residues 24–273 (QDPRFLAYYC…SLSDKSGNSN (250 aa)) lie on the Extracellular side of the membrane. Gnk2-homologous domains lie at 27 to 131 (RFLA…HKNI) and 142 to 244 (FILR…LYDF). Residues Asn35, Asn42, Asn60, Asn69, and Asn103 are each glycosylated (N-linked (GlcNAc...) asparagine). N-linked (GlcNAc...) asparagine glycosylation is present at Asn246. The helical transmembrane segment at 274–294 (VVVVAVVVPIIVAVLIFIAGY) threads the bilayer. Topologically, residues 295 to 659 (CFFAKRAKKT…DKSMSDLDPR (365 aa)) are cytoplasmic. The Protein kinase domain maps to 336–622 (FSENNKIGRG…ALPAPQQPGF (287 aa)). Residues 342–350 (IGRGGFGDV) and Lys364 contribute to the ATP site. Tyr409 carries the post-translational modification Phosphotyrosine. Asp461 serves as the catalytic Proton acceptor. At Ser465 the chain carries Phosphoserine. Thr501 carries the phosphothreonine modification. At Tyr509 the chain carries Phosphotyrosine. The disordered stretch occupies residues 626-659 (SRPGTNRLDSDQSTTNKSVTVSIDDKSMSDLDPR). Polar residues predominate over residues 636-646 (DQSTTNKSVTV). A compositionally biased stretch (basic and acidic residues) spans 648–659 (IDDKSMSDLDPR).

Belongs to the protein kinase superfamily. Ser/Thr protein kinase family. CRK subfamily.

It localises to the membrane. It carries out the reaction L-seryl-[protein] + ATP = O-phospho-L-seryl-[protein] + ADP + H(+). It catalyses the reaction L-threonyl-[protein] + ATP = O-phospho-L-threonyl-[protein] + ADP + H(+). This chain is Cysteine-rich receptor-like protein kinase 7 (CRK7), found in Arabidopsis thaliana (Mouse-ear cress).